The sequence spans 485 residues: ATP synthase subunit beta (485 aa).

ATP is bound at residue 170 to 177; it reads GGAGVGKT.

Belongs to the ATPase alpha/beta chains family. As to quaternary structure, F-type ATPases have 2 components, CF(1) - the catalytic core - and CF(0) - the membrane proton channel. CF(1) has five subunits: alpha(3), beta(3), gamma(1), delta(1), epsilon(1). CF(0) has three main subunits: a(1), b(2) and c(9-12). The alpha and beta chains form an alternating ring which encloses part of the gamma chain. CF(1) is attached to CF(0) by a central stalk formed by the gamma and epsilon chains, while a peripheral stalk is formed by the delta and b chains.

The protein localises to the cell membrane. It carries out the reaction ATP + H2O + 4 H(+)(in) = ADP + phosphate + 5 H(+)(out). In terms of biological role, produces ATP from ADP in the presence of a proton gradient across the membrane. The catalytic sites are hosted primarily by the beta subunits. In Salinispora arenicola (strain CNS-205), this protein is ATP synthase subunit beta.